Consider the following 341-residue polypeptide: Malate dehydrogenase 2, mitochondrial (341 aa).

The transit peptide at 1-22 (MFRSMIVRSASPVKQGLLRRGF) directs the protein to the mitochondrion. Residues 36–42 (GAAGGIG) and aspartate 62 contribute to the NAD(+) site. Substrate is bound by residues arginine 109 and arginine 115. NAD(+)-binding positions include asparagine 122 and 145-147 (ISN). Substrate-binding residues include asparagine 147 and arginine 181. Catalysis depends on histidine 205, which acts as the Proton acceptor. An NAD(+)-binding site is contributed by methionine 256.

Belongs to the LDH/MDH superfamily. MDH type 1 family. In terms of assembly, homodimer. In terms of tissue distribution, expressed in rosette leaves at low levels.

Its subcellular location is the mitochondrion matrix. It catalyses the reaction (S)-malate + NAD(+) = oxaloacetate + NADH + H(+). Functionally, catalyzes a reversible NAD-dependent dehydrogenase reaction involved in central metabolism and redox homeostasis between organelle compartments. Required for carbon dioxide and energy partitioning in leaves. May limit photorespiration during the dark phase. Can convert 2-ketoglutarate to L-2-hydroxyglutarate in vitro. This Arabidopsis thaliana (Mouse-ear cress) protein is Malate dehydrogenase 2, mitochondrial.